The primary structure comprises 508 residues: Probable monogalactosyldiacylglycerol synthase 3, chloroplastic (508 aa).

The N-terminal 60 residues, 1 to 60, are a transit peptide targeting the chloroplast; it reads MAASSSSSSSMASPRGRSIRETVLETVAAYHQQQRMRRKFRKSLSYAGELSSAGRARGEG. The tract at residues 51–79 is disordered; the sequence is SSAGRARGEGGASSSASTTSLCGPDEDDE.

Belongs to the glycosyltransferase 28 family.

Its subcellular location is the plastid. The protein resides in the chloroplast membrane. The catalysed reaction is a 1,2-diacyl-sn-glycerol + UDP-alpha-D-galactose = a 1,2-diacyl-3-O-(beta-D-galactosyl)-sn-glycerol + UDP + H(+). Involved in the synthesis of the major structural component of photosynthetic membranes. The sequence is that of Probable monogalactosyldiacylglycerol synthase 3, chloroplastic (MGD3) from Oryza sativa subsp. japonica (Rice).